A 1420-amino-acid chain; its full sequence is DNA-directed RNA polymerase subunit beta' (1420 aa).

Cys-71, Cys-73, Cys-86, and Cys-89 together coordinate Zn(2+). Positions 461, 463, and 465 each coordinate Mg(2+). Positions 815, 889, 896, and 899 each coordinate Zn(2+).

The protein belongs to the RNA polymerase beta' chain family. As to quaternary structure, the RNAP catalytic core consists of 2 alpha, 1 beta, 1 beta' and 1 omega subunit. When a sigma factor is associated with the core the holoenzyme is formed, which can initiate transcription. Mg(2+) is required as a cofactor. It depends on Zn(2+) as a cofactor.

The catalysed reaction is RNA(n) + a ribonucleoside 5'-triphosphate = RNA(n+1) + diphosphate. In terms of biological role, DNA-dependent RNA polymerase catalyzes the transcription of DNA into RNA using the four ribonucleoside triphosphates as substrates. The chain is DNA-directed RNA polymerase subunit beta' from Histophilus somni (strain 129Pt) (Haemophilus somnus).